A 178-amino-acid chain; its full sequence is Cytidylate kinase 2 (178 aa).

Position 7 to 15 (7 to 15) interacts with ATP; it reads GKSGCGNTT.

Belongs to the cytidylate kinase family. Type 2 subfamily.

Its subcellular location is the cytoplasm. It catalyses the reaction CMP + ATP = CDP + ADP. The catalysed reaction is dCMP + ATP = dCDP + ADP. This Borreliella afzelii (strain PKo) (Borrelia afzelii) protein is Cytidylate kinase 2.